A 299-amino-acid polypeptide reads, in one-letter code: tRNA dimethylallyltransferase (299 aa).

Position 13–20 (13–20 (GPTASGKT)) interacts with ATP. Substrate is bound at residue 15–20 (TASGKT). The interval 38 to 41 (DSRQ) is interaction with substrate tRNA.

The protein belongs to the IPP transferase family. In terms of assembly, monomer. Requires Mg(2+) as cofactor.

It carries out the reaction adenosine(37) in tRNA + dimethylallyl diphosphate = N(6)-dimethylallyladenosine(37) in tRNA + diphosphate. Functionally, catalyzes the transfer of a dimethylallyl group onto the adenine at position 37 in tRNAs that read codons beginning with uridine, leading to the formation of N6-(dimethylallyl)adenosine (i(6)A). The protein is tRNA dimethylallyltransferase of Prochlorococcus marinus (strain AS9601).